The following is a 222-amino-acid chain: CEACAM1-like protein UL7 (222 aa).

12 N-linked (GlcNAc...) asparagine; by host glycosylation sites follow: Asn50, Asn56, Asn60, Asn71, Asn105, Asn109, Asn125, Asn132, Asn147, Asn164, Asn168, and Asn189. The chain crosses the membrane as a helical span at residues 193 to 213 (LALVGVVVFLVLIVVCIMGWW).

It belongs to the RL11 family. In terms of processing, highly glycosylated.

Its subcellular location is the secreted. It is found in the host cell membrane. Its function is as follows. Plays a role in modulating the host immune response and affecting host cytokine production. Structurally and functionally homolog of host CEACAM1, induces endothelial cell angiogenesis. In Homo sapiens (Human), this protein is CEACAM1-like protein UL7 (UL7).